Reading from the N-terminus, the 247-residue chain is 2,3-bisphosphoglycerate-dependent phosphoglycerate mutase (247 aa).

Residues 7 to 14 (RHGESEWN), 20 to 21 (TG), R59, 86 to 89 (ERHY), K97, 113 to 114 (RR), and 182 to 183 (GN) each bind substrate. The Tele-phosphohistidine intermediate role is filled by H8. The active-site Proton donor/acceptor is E86.

The protein belongs to the phosphoglycerate mutase family. BPG-dependent PGAM subfamily.

It carries out the reaction (2R)-2-phosphoglycerate = (2R)-3-phosphoglycerate. Its pathway is carbohydrate degradation; glycolysis; pyruvate from D-glyceraldehyde 3-phosphate: step 3/5. In terms of biological role, catalyzes the interconversion of 2-phosphoglycerate and 3-phosphoglycerate. In Treponema denticola (strain ATCC 35405 / DSM 14222 / CIP 103919 / JCM 8153 / KCTC 15104), this protein is 2,3-bisphosphoglycerate-dependent phosphoglycerate mutase.